The following is a 1434-amino-acid chain: Receptor-type tyrosine-protein phosphatase U (1434 aa).

The first 17 residues, 1–17 (MRSARALLLALALRVCA), serve as a signal peptide directing secretion. Residues 18–748 (LDSETPSAGC…QHSEEMGLIL (731 aa)) lie on the Extracellular side of the membrane. The MAM domain occupies 25 to 187 (AGCTFEEDDD…ILLLNYPCSK (163 aa)). The N-linked (GlcNAc...) asparagine glycan is linked to asparagine 74. In terms of domain architecture, Ig-like C2-type spans 189–274 (PHFSRLGDVE…TQSSRGSGVS (86 aa)). Cysteines 209 and 263 form a disulfide. 4 Fibronectin type-III domains span residues 287 to 382 (PIAP…CAEP), 385 to 483 (APKG…TDED), 484 to 590 (VPGG…SAPT), and 597 to 677 (PSPL…TEAK). A glycan (N-linked (GlcNAc...) asparagine) is linked at asparagine 409. N-linked (GlcNAc...) asparagine glycosylation is present at asparagine 684. The chain crosses the membrane as a helical span at residues 749–769 (GICAGGLVVLIILLGAIIVVI). At 770-1434 (RKGKPVNMTK…LEYLESLETR (665 aa)) the chain is on the cytoplasmic side. Residues 824 to 839 (RGDQRSSVVNESSSLL) are compositionally biased toward polar residues. Positions 824–851 (RGDQRSSVVNESSSLLGGSPRRQCGRKG) are disordered. 2 consecutive Tyrosine-protein phosphatase domains span residues 876 to 1132 (KTAE…ILEA) and 1164 to 1427 (LREE…ALEY). Residues glutamate 1041, 1073 to 1079 (CSAGTGR), and glutamine 1117 each bind substrate. Cysteine 1073 functions as the Phosphocysteine intermediate in the catalytic mechanism. The active-site Phosphocysteine intermediate is the cysteine 1368.

Belongs to the protein-tyrosine phosphatase family. Receptor class 2B subfamily.

The protein resides in the cell junction. Its subcellular location is the cell membrane. It catalyses the reaction O-phospho-L-tyrosyl-[protein] + H2O = L-tyrosyl-[protein] + phosphate. Tyrosine-protein phosphatase which dephosphorylates CTNNB1. May function in cell proliferation and migration and play a role in the maintenance of epithelial integrity. The protein is Receptor-type tyrosine-protein phosphatase U (PTPRU) of Gallus gallus (Chicken).